We begin with the raw amino-acid sequence, 514 residues long: RNA-splicing ligase RtcB homolog (514 aa).

Mn(2+)-binding residues include Asp-128, Cys-131, His-236, His-268, and His-362. Residue 235 to 239 coordinates GMP; sequence NHYAE. Residues 362-363, 411-414, Ser-418, 437-440, and Lys-513 contribute to the GMP site; these read HN, GGTM, and HGAG. Catalysis depends on His-437, which acts as the GMP-histidine intermediate.

It belongs to the RtcB family. Catalytic component of the tRNA-splicing ligase complex. The cofactor is Mn(2+).

The enzyme catalyses a 3'-end 3'-phospho-ribonucleotide-RNA + a 5'-end dephospho-ribonucleoside-RNA + GTP = a ribonucleotidyl-ribonucleotide-RNA + GMP + diphosphate. It carries out the reaction a 3'-end 2',3'-cyclophospho-ribonucleotide-RNA + a 5'-end dephospho-ribonucleoside-RNA + GTP + H2O = a ribonucleotidyl-ribonucleotide-RNA + GMP + diphosphate + H(+). Its function is as follows. Catalytic subunit of the tRNA-splicing ligase complex that acts by directly joining spliced tRNA halves to mature-sized tRNAs by incorporating the precursor-derived splice junction phosphate into the mature tRNA as a canonical 3',5'-phosphodiester. May act as an RNA ligase with broad substrate specificity, and may function toward other RNAs. The protein is RNA-splicing ligase RtcB homolog of Ostreococcus lucimarinus (strain CCE9901).